A 206-amino-acid chain; its full sequence is Superoxide dismutase [Mn] (206 aa).

His27, His82, Asp168, and His172 together coordinate Mn(2+).

The protein belongs to the iron/manganese superoxide dismutase family. The cofactor is Mn(2+).

It catalyses the reaction 2 superoxide + 2 H(+) = H2O2 + O2. Its function is as follows. Destroys superoxide anion radicals which are normally produced within the cells and which are toxic to biological systems. The protein is Superoxide dismutase [Mn] (sodA) of Lactococcus lactis subsp. lactis (strain IL1403) (Streptococcus lactis).